A 356-amino-acid polypeptide reads, in one-letter code: Protein-arginine kinase (356 aa).

In terms of domain architecture, Phosphagen kinase C-terminal spans 22 to 249 (FRPISTLSLS…SKILSAETEA (228 aa)). Residues 25–29 (ISTLS), 172–176 (VARAF), and 202–207 (SSLLPL) each bind ATP.

This sequence belongs to the ATP:guanido phosphotransferase family.

The catalysed reaction is L-arginyl-[protein] + ATP = N(omega)-phospho-L-arginyl-[protein] + ADP + H(+). In terms of biological role, catalyzes the specific phosphorylation of arginine residues in proteins. The sequence is that of Protein-arginine kinase from Chlamydia muridarum (strain MoPn / Nigg).